A 308-amino-acid chain; its full sequence is Ribonuclease HIII (308 aa).

One can recognise an RNase H type-2 domain in the interval 91-308 (KNVIGSDEVG…TEKALKMVKK (218 aa)). A divalent metal cation contacts are provided by Asp97, Glu98, and Asp202.

Belongs to the RNase HII family. RnhC subfamily. Mn(2+) serves as cofactor. The cofactor is Mg(2+).

The protein localises to the cytoplasm. The enzyme catalyses Endonucleolytic cleavage to 5'-phosphomonoester.. Endonuclease that specifically degrades the RNA of RNA-DNA hybrids. This Listeria monocytogenes serovar 1/2a (strain ATCC BAA-679 / EGD-e) protein is Ribonuclease HIII.